A 307-amino-acid polypeptide reads, in one-letter code: Ribonuclease H2 subunit B (307 aa).

Alanine 2 bears the N-acetylalanine mark. The residue at position 291 (lysine 291) is an N6-acetyllysine. Serine 292 carries the post-translational modification Phosphoserine.

Belongs to the RNase H2 subunit B family. In terms of assembly, the RNase H2 complex is a heterotrimer composed of the catalytic subunit RNASEH2A and the non-catalytic subunits RNASEH2B and RNASEH2C.

It is found in the nucleus. Its function is as follows. Non catalytic subunit of RNase H2, an endonuclease that specifically degrades the RNA of RNA:DNA hybrids. Participates in DNA replication, possibly by mediating the removal of lagging-strand Okazaki fragment RNA primers during DNA replication. Mediates the excision of single ribonucleotides from DNA:RNA duplexes. This Rattus norvegicus (Rat) protein is Ribonuclease H2 subunit B (Rnaseh2b).